Consider the following 436-residue polypeptide: bZIP transcription factor RISBZ1 (436 aa).

The required for transactivation activity stretch occupies residues Met-1–Ala-27. Residues Leu-182–Ala-258 are disordered. Residues Pro-215 to Ala-225 show a composition bias toward acidic residues. Residues Glu-236–Leu-299 enclose the bZIP domain. Residues Lys-238 to Lys-257 form a basic motif region. Residues Leu-264–Leu-278 form a leucine-zipper region.

In terms of assembly, homodimer. Forms heterodimers with RISBZ2/BZP33 and RISBZ3/BZP20. Interacts with DOF3/RPBF. As to expression, specifically expressed in seeds. Expressed in aleurone and subaleurone layers of maturing seeds, but not in the embryo tissues.

The protein resides in the nucleus. Transcriptional activator that binds to the DNA specific sequence 5'-TGAGTCA-3' found in seed storage protein gene promoters. Involved in the endosperm-specific regulation of storage protein genes. Can activate the expression of genes encoding for the seed storage proteins glutelin, prolamin, globulin and the allergen RAG1. Functions synergistically with DOF3/RPBF to positively regulate quantitatively many seed storage protein genes. Functions synergistically with DOF3/RPBF to positively regulate some metabolic enzymes, such as alanine aminotransferase and pyruvate phosphate dikinase, that are expressed in developing seeds. Functions synergistically with DOF3/RPBF to positively regulate genes that are key players in the development of aleurone layers. Functions synergistically with DOF3/RPBF to positively regulate the glutelin GLUD-1 gene in endosperm of developing seeds. Can activate the expression of the bifunctional lysine-degrading enzyme, lysine ketoglutarate reductase/saccharopine dehydrogenase (LKR/SDH), one of the key regulators determining free lysine content in plants. Functions as a key regulator of starch synthesis in seeds, by direct binding to the promoters of starch-synthesizing genes, such as AGPL3, WAXXY and SBE1. The chain is bZIP transcription factor RISBZ1 from Oryza sativa subsp. japonica (Rice).